The primary structure comprises 192 residues: Transmembrane protein 276 (192 aa).

The first 32 residues, 1-32 (MVSKPRNEWSTALSHLVLAGVSLHAAVSSVQS), serve as a signal peptide directing secretion. A run of 4 helical transmembrane segments spans residues 35-55 (GAAA…APEL), 63-83 (AGAW…FHWV), 92-112 (LLLG…PEGC), and 114-134 (VAGQ…AVFT).

It localises to the membrane. This Rattus norvegicus (Rat) protein is Transmembrane protein 276.